Reading from the N-terminus, the 101-residue chain is Small ribosomal subunit protein uS14 (101 aa).

This sequence belongs to the universal ribosomal protein uS14 family. As to quaternary structure, part of the 30S ribosomal subunit. Contacts proteins S3 and S10.

Binds 16S rRNA, required for the assembly of 30S particles and may also be responsible for determining the conformation of the 16S rRNA at the A site. This chain is Small ribosomal subunit protein uS14, found in Haemophilus ducreyi (strain 35000HP / ATCC 700724).